The sequence spans 573 residues: Pyrophosphate--fructose 6-phosphate 1-phosphotransferase (573 aa).

Gly90 is a binding site for diphosphate. Asp184 is a binding site for Mg(2+). Substrate is bound by residues 212-214 (TID), 251-252 (KY), 259-261 (MGR), Glu320, and 434-437 (YEGR). Asp214 serves as the catalytic Proton acceptor.

Belongs to the phosphofructokinase type A (PFKA) family. PPi-dependent PFK group II subfamily. Clade 'Long' sub-subfamily. As to quaternary structure, homodimer. It depends on Mg(2+) as a cofactor.

The protein resides in the cytoplasm. The enzyme catalyses beta-D-fructose 6-phosphate + diphosphate = beta-D-fructose 1,6-bisphosphate + phosphate + H(+). The protein operates within carbohydrate degradation; glycolysis; D-glyceraldehyde 3-phosphate and glycerone phosphate from D-glucose: step 3/4. Non-allosteric. Its function is as follows. Catalyzes the phosphorylation of D-fructose 6-phosphate, the first committing step of glycolysis. Uses inorganic phosphate (PPi) as phosphoryl donor instead of ATP like common ATP-dependent phosphofructokinases (ATP-PFKs), which renders the reaction reversible, and can thus function both in glycolysis and gluconeogenesis. Consistently, PPi-PFK can replace the enzymes of both the forward (ATP-PFK) and reverse (fructose-bisphosphatase (FBPase)) reactions. The sequence is that of Pyrophosphate--fructose 6-phosphate 1-phosphotransferase from Treponema pallidum (strain Nichols).